Reading from the N-terminus, the 1068-residue chain is Phosphatidylinositol 4,5-bisphosphate 3-kinase catalytic subunit alpha isoform (1068 aa).

The PI3K-ABD domain occupies 16-105 (MPPRILVECL…QPFLKVIEPV (90 aa)). The region spanning 187-289 (KGQIIVVIWV…GRMPNLMLMA (103 aa)) is the PI3K-RBD domain. The 158-residue stretch at 330–487 (INSALRIKIL…DWFSSVVKFP (158 aa)) folds into the C2 PI3K-type domain. The 178-residue stretch at 517 to 694 (LARDNELREN…GLLLESYCRA (178 aa)) folds into the PIK helical domain. One can recognise a PI3K/PI4K catalytic domain in the interval 765 to 1051 (RLEECRIMSS…QMNDAHHGGW (287 aa)). The segment at 771–777 (IMSSAKR) is G-loop. The segment at 912–920 (GIGDRHNSN) is catalytic loop. Positions 931–957 (HIDFGHFLDHKKKKFGYKRERVPFVLT) are activation loop.

Belongs to the PI3/PI4-kinase family. In terms of assembly, heterodimer of a catalytic subunit PIK3CA and a p85 regulatory subunit (PIK3R1, PIK3R2 or PIK3R3). Interacts with IRS1 in nuclear extracts. Interacts with RUFY3. Interacts with RASD2. Interacts with APPL1. Interacts with HRAS and KRAS. Interaction with HRAS/KRAS is required for PI3K pathway signaling and cell proliferation stimulated by EGF and FGF2. Interacts with FAM83B; activates the PI3K/AKT signaling cascade.

The catalysed reaction is a 1,2-diacyl-sn-glycero-3-phospho-(1D-myo-inositol-4,5-bisphosphate) + ATP = a 1,2-diacyl-sn-glycero-3-phospho-(1D-myo-inositol-3,4,5-trisphosphate) + ADP + H(+). It catalyses the reaction a 1,2-diacyl-sn-glycero-3-phospho-(1D-myo-inositol) + ATP = a 1,2-diacyl-sn-glycero-3-phospho-(1D-myo-inositol-3-phosphate) + ADP + H(+). The enzyme catalyses L-seryl-[protein] + ATP = O-phospho-L-seryl-[protein] + ADP + H(+). It carries out the reaction 1,2-dioctanoyl-sn-glycero-3-phospho-(1D-myo-inositol-4,5-bisphosphate) + ATP = 1,2-dioctanoyl-sn-glycero-3-phospho-(1D-myo-inositol-3,4,5-trisphosphate) + ADP + H(+). The catalysed reaction is 1-octadecanoyl-2-(5Z,8Z,11Z,14Z)-eicosatetraenoyl-sn-glycero-3-phospho-1D-myo-inositol 4,5-bisphosphate + ATP = 1-octadecanoyl-2-(5Z,8Z,11Z,14Z-eicosatetraenoyl)-sn-glycero-3-phospho-(1D-myo-inositol 3,4,5-triphosphate) + ADP + H(+). It functions in the pathway phospholipid metabolism; phosphatidylinositol phosphate biosynthesis. In terms of biological role, phosphoinositide-3-kinase (PI3K) phosphorylates phosphatidylinositol (PI) and its phosphorylated derivatives at position 3 of the inositol ring to produce 3-phosphoinositides. Uses ATP and PtdIns(4,5)P2 (phosphatidylinositol 4,5-bisphosphate) to generate phosphatidylinositol 3,4,5-trisphosphate (PIP3). PIP3 plays a key role by recruiting PH domain-containing proteins to the membrane, including AKT1 and PDPK1, activating signaling cascades involved in cell growth, survival, proliferation, motility and morphology. Participates in cellular signaling in response to various growth factors. Involved in the activation of AKT1 upon stimulation by receptor tyrosine kinases ligands such as EGF, insulin, IGF1, VEGFA and PDGF. Involved in signaling via insulin-receptor substrate (IRS) proteins. Essential in endothelial cell migration during vascular development through VEGFA signaling, possibly by regulating RhoA activity. Required for lymphatic vasculature development, possibly by binding to RAS and by activation by EGF and FGF2, but not by PDGF. Regulates invadopodia formation through the PDPK1-AKT1 pathway. Participates in cardiomyogenesis in embryonic stem cells through a AKT1 pathway. Participates in vasculogenesis in embryonic stem cells through PDK1 and protein kinase C pathway. Also has serine-protein kinase activity: phosphorylates PIK3R1 (p85alpha regulatory subunit), EIF4EBP1 and HRAS. Plays a role in the positive regulation of phagocytosis and pinocytosis. The chain is Phosphatidylinositol 4,5-bisphosphate 3-kinase catalytic subunit alpha isoform (Pik3ca) from Mus musculus (Mouse).